Here is a 218-residue protein sequence, read N- to C-terminus: MGRVFLTGEKANSVLKRYPRANGFFEEIRQGNIERECKEEFCTFEEAREAFENNEKTKEFWSTYTKAQQGESNRGSDWFQFYLTFPLIFGLFIILLVIFLIWRCFLRNKTRRQTVTEGHIPFPQHLNIITPPPPPDEVFDSSGLSPGFLGYVVGRSDSVSTRLSNCDPPPTYEEATGQVNLQRSETEPHLDPPPEYEDIVNSNSASAIPMVPVVTTIK.

Residues methionine 1–arginine 20 constitute a propeptide that is removed on maturation. In terms of domain architecture, Gla spans arginine 20–lysine 66. At alanine 21–glutamine 80 the chain is on the extracellular side. Cysteine 37 and cysteine 42 form a disulfide bridge. The helical transmembrane segment at phenylalanine 81–isoleucine 101 threads the bilayer. Topologically, residues tryptophan 102–lysine 218 are cytoplasmic. A disordered region spans residues threonine 161–glutamate 195.

In terms of processing, gla residues are produced after subsequent post-translational modifications of glutamate by a vitamin K-dependent gamma-carboxylase.

It localises to the membrane. This chain is Transmembrane gamma-carboxyglutamic acid protein 1 (PRRG1), found in Pongo abelii (Sumatran orangutan).